The primary structure comprises 223 residues: Ribonuclease 3 (223 aa).

Residues 3 to 125 (LERLQKKLGY…IIAAVYLDAG (123 aa)) enclose the RNase III domain. Glutamate 38 contributes to the Mg(2+) binding site. Aspartate 42 is an active-site residue. Mg(2+) contacts are provided by aspartate 111 and glutamate 114. Residue glutamate 114 is part of the active site. The DRBM domain maps to 152 to 222 (DPKTRLQEYL…ALQVIKVLGI (71 aa)).

It belongs to the ribonuclease III family. Homodimer. The cofactor is Mg(2+).

It is found in the cytoplasm. The catalysed reaction is Endonucleolytic cleavage to 5'-phosphomonoester.. Digests double-stranded RNA. Involved in the processing of primary rRNA transcript to yield the immediate precursors to the large and small rRNAs (23S and 16S). Processes some mRNAs, and tRNAs when they are encoded in the rRNA operon. Processes pre-crRNA and tracrRNA of type II CRISPR loci if present in the organism. The chain is Ribonuclease 3 from Glaesserella parasuis serovar 5 (strain SH0165) (Haemophilus parasuis).